Here is a 279-residue protein sequence, read N- to C-terminus: 2-dehydropantoate 2-reductase (279 aa).

NADP(+)-binding positions include 6-11 (GLGAVG), Lys-66, and Asn-86. Lys-158 (proton donor) is an active-site residue. Substrate-binding positions include Lys-158, Asn-162, Asn-166, Asn-176, and 225–228 (NLSS). Glu-240 contacts NADP(+).

It belongs to the ketopantoate reductase family.

It localises to the cytoplasm. It carries out the reaction (R)-pantoate + NAD(+) = 2-dehydropantoate + NADH + H(+). The catalysed reaction is (R)-pantoate + NADP(+) = 2-dehydropantoate + NADPH + H(+). It participates in cofactor biosynthesis; coenzyme A biosynthesis. Catalyzes the NAD(P)H-dependent reduction of ketopantoate into pantoic acid. The protein is 2-dehydropantoate 2-reductase of Pyrobaculum aerophilum (strain ATCC 51768 / DSM 7523 / JCM 9630 / CIP 104966 / NBRC 100827 / IM2).